The primary structure comprises 340 residues: Chitinase 7 (340 aa).

Residues 1-32 (MIAARAANLQVAMKALALAVLALAYAAATARA) form the signal peptide. A Chitin-binding type-1 domain is found at 33 to 73 (EQCGRQAGGARCPNRLCCSRWGWCGLTDDYCKGGCQSQCRV). 7 disulfide bridges follow: Cys-35/Cys-50, Cys-44/Cys-56, Cys-49/Cys-63, Cys-67/Cys-71, Cys-118/Cys-173, Cys-185/Cys-193, and Cys-293/Cys-323.

Belongs to the glycosyl hydrolase 19 family. Chitinase class I subfamily. In terms of tissue distribution, expressed in pistils, stamens and lodicules.

The catalysed reaction is Random endo-hydrolysis of N-acetyl-beta-D-glucosaminide (1-&gt;4)-beta-linkages in chitin and chitodextrins.. Functionally, hydrolyzes chitin and may play a role in defense against fungal pathogens containing chitin. This is Chitinase 7 (Cht7) from Oryza sativa subsp. indica (Rice).